Consider the following 108-residue polypeptide: Signal recognition particle 19 kDa protein (108 aa).

The protein belongs to the SRP19 family. Part of the signal recognition particle protein translocation system, which is composed of SRP and FtsY. Archaeal SRP consists of a 7S RNA molecule of 300 nucleotides and two protein subunits: SRP54 and SRP19.

It localises to the cytoplasm. Functionally, involved in targeting and insertion of nascent membrane proteins into the cytoplasmic membrane. Binds directly to 7S RNA and mediates binding of the 54 kDa subunit of the SRP. This Thermococcus kodakarensis (strain ATCC BAA-918 / JCM 12380 / KOD1) (Pyrococcus kodakaraensis (strain KOD1)) protein is Signal recognition particle 19 kDa protein.